We begin with the raw amino-acid sequence, 708 residues long: WD repeat-containing and planar cell polarity effector protein fritz homolog (708 aa).

2 WD repeats span residues 303-342 (PLRS…TLLA) and 343-382 (QADL…IRAQ).

It belongs to the WD repeat fritz family. In terms of assembly, interacts with sept2-a. Interacts with intu and fuz; fuz, intu and wdpcp probably form the core CPLANE (ciliogenesis and planar polarity effectors) complex.

It localises to the cell membrane. Its subcellular location is the cytoplasm. It is found in the cytoskeleton. The protein resides in the cilium axoneme. The protein localises to the cilium basal body. Probable effector of the planar cell polarity signaling pathway which regulates the septin cytoskeleton in both ciliogenesis and collective cell movements including covergent extension during gastrulation. Controls cell shape but not polarization during convergent extension. Proposed to function as core component of the CPLANE (ciliogenesis and planar polarity effectors) complex involved in the recruitment of peripheral IFT-A proteins to basal bodies. The polypeptide is WD repeat-containing and planar cell polarity effector protein fritz homolog (wdpcp) (Xenopus laevis (African clawed frog)).